The sequence spans 473 residues: Photosystem II CP43 reaction center protein (473 aa).

Positions 1–14 (MKTLYSLRRFYHVE) are excised as a propeptide. Thr-15 bears the N-acetylthreonine mark. Position 15 is a phosphothreonine (Thr-15). 5 helical membrane passes run 69–93 (LFEV…PHLA), 134–155 (LLGP…KDRN), 178–200 (KALY…RKIT), 255–275 (KPFA…LSYS), and 291–312 (WFNN…ASQA). A [CaMn4O5] cluster-binding site is contributed by Glu-367. Residues 447 to 471 (RARAAAAGFEKGIDRDFEPVLSMTP) form a helical membrane-spanning segment.

This sequence belongs to the PsbB/PsbC family. PsbC subfamily. As to quaternary structure, PSII is composed of 1 copy each of membrane proteins PsbA, PsbB, PsbC, PsbD, PsbE, PsbF, PsbH, PsbI, PsbJ, PsbK, PsbL, PsbM, PsbT, PsbX, PsbY, PsbZ, Psb30/Ycf12, at least 3 peripheral proteins of the oxygen-evolving complex and a large number of cofactors. It forms dimeric complexes. It depends on Binds multiple chlorophylls and provides some of the ligands for the Ca-4Mn-5O cluster of the oxygen-evolving complex. It may also provide a ligand for a Cl- that is required for oxygen evolution. PSII binds additional chlorophylls, carotenoids and specific lipids. as a cofactor.

The protein localises to the plastid. Its subcellular location is the chloroplast thylakoid membrane. Functionally, one of the components of the core complex of photosystem II (PSII). It binds chlorophyll and helps catalyze the primary light-induced photochemical processes of PSII. PSII is a light-driven water:plastoquinone oxidoreductase, using light energy to abstract electrons from H(2)O, generating O(2) and a proton gradient subsequently used for ATP formation. This is Photosystem II CP43 reaction center protein from Crucihimalaya wallichii (Rock-cress).